A 131-amino-acid polypeptide reads, in one-letter code: MATVPTRSGSPRQLTTKQTGDAWEVQARRWLEGKGLRFVAANVNERGGEIDLIMREGWTTVFVEVRYRRSALYGGAAASVTRSKQHKLLQTARLWLARHNGSFDTVDCRFDVVAFTGNEVEWIKDAFNDHS.

Over residues 1–19 (MATVPTRSGSPRQLTTKQT) the composition is skewed to polar residues. Positions 1 to 20 (MATVPTRSGSPRQLTTKQTG) are disordered.

It belongs to the UPF0102 family.

The sequence is that of UPF0102 protein YraN from Shigella boydii serotype 18 (strain CDC 3083-94 / BS512).